We begin with the raw amino-acid sequence, 279 residues long: Shikimate dehydrogenase (NADP(+)) (279 aa).

Shikimate is bound by residues 14–16 (SIS) and T63. K67 (proton acceptor) is an active-site residue. An NADP(+)-binding site is contributed by E79. Shikimate contacts are provided by N88 and D103. NADP(+) is bound by residues 127–131 (GAGGA), 151–156 (NRTYEK), and M219. Y221 is a shikimate binding site. G242 is an NADP(+) binding site.

This sequence belongs to the shikimate dehydrogenase family. In terms of assembly, homodimer.

The catalysed reaction is shikimate + NADP(+) = 3-dehydroshikimate + NADPH + H(+). Its pathway is metabolic intermediate biosynthesis; chorismate biosynthesis; chorismate from D-erythrose 4-phosphate and phosphoenolpyruvate: step 4/7. Its function is as follows. Involved in the biosynthesis of the chorismate, which leads to the biosynthesis of aromatic amino acids. Catalyzes the reversible NADPH linked reduction of 3-dehydroshikimate (DHSA) to yield shikimate (SA). The protein is Shikimate dehydrogenase (NADP(+)) of Caldicellulosiruptor saccharolyticus (strain ATCC 43494 / DSM 8903 / Tp8T 6331).